The primary structure comprises 280 residues: 3-deoxy-manno-octulosonate cytidylyltransferase (280 aa).

The protein belongs to the KdsB family.

The protein resides in the cytoplasm. It catalyses the reaction 3-deoxy-alpha-D-manno-oct-2-ulosonate + CTP = CMP-3-deoxy-beta-D-manno-octulosonate + diphosphate. Its pathway is nucleotide-sugar biosynthesis; CMP-3-deoxy-D-manno-octulosonate biosynthesis; CMP-3-deoxy-D-manno-octulosonate from 3-deoxy-D-manno-octulosonate and CTP: step 1/1. It participates in bacterial outer membrane biogenesis; lipopolysaccharide biosynthesis. Functionally, activates KDO (a required 8-carbon sugar) for incorporation into bacterial lipopolysaccharide in Gram-negative bacteria. The sequence is that of 3-deoxy-manno-octulosonate cytidylyltransferase from Colwellia psychrerythraea (strain 34H / ATCC BAA-681) (Vibrio psychroerythus).